The sequence spans 222 residues: Non-structural protein V (222 aa).

A disordered region spans residues Glu-61–Ser-107. The Zn(2+) site is built by His-171, Cys-190, Cys-194, Cys-206, Cys-208, Cys-211, Cys-215, and Cys-218.

This sequence belongs to the paramyxoviruses V protein family. Interacts with host DDB1, STAT2 and IFIH1/MDA5. Interacts with host RIGI regulatory protein (via CARDs domain) and host TRIM25 (via SPRY domain); these interactions prevent TRIM25-mediated ubiquitination of RIG-I and disrupts downstream RIG-I signaling.

The protein localises to the host cytoplasm. Plays an essential role in the inhibition of host immune response. Prevents the establishment of cellular antiviral state by blocking interferon-alpha/beta (IFN-alpha/beta) production and signaling pathway. Interacts with host IFIH1/MDA5 and DHX58/LGP2 to inhibit the transduction pathway involved in the activation of IFN-beta promoter, thus protecting the virus against cell antiviral state. Efficiently blocks type I IFN signaling following infection by behaving as a substrate receptor for CUL4-DDB1 E3 ligase complex and targeting host STAT1 for proteasomal degradation. Blocks the type I interferon signaling pathway by disrupting the RIG-I signaling pathway. In Parainfluenza virus 5 (strain W3) (PIV5), this protein is Non-structural protein V (P/V).